The primary structure comprises 361 residues: Peptide chain release factor 1 (361 aa).

Q238 is subject to N5-methylglutamine.

The protein belongs to the prokaryotic/mitochondrial release factor family. Post-translationally, methylated by PrmC. Methylation increases the termination efficiency of RF1.

It is found in the cytoplasm. Peptide chain release factor 1 directs the termination of translation in response to the peptide chain termination codons UAG and UAA. This Mesomycoplasma hyopneumoniae (strain 232) (Mycoplasma hyopneumoniae) protein is Peptide chain release factor 1.